The following is a 544-amino-acid chain: Putative ligase Rv1013 (544 aa).

An Isoglutamyl lysine isopeptide (Lys-Gln) (interchain with Q-Cter in protein Pup) cross-link involves residue Lys-528.

It belongs to the ATP-dependent AMP-binding enzyme family. Post-translationally, pupylated at Lys-528 by the prokaryotic ubiquitin-like protein Pup, which probably leads to its degradation by the proteasome.

This chain is Putative ligase Rv1013 (pks16), found in Mycobacterium tuberculosis (strain ATCC 25618 / H37Rv).